Reading from the N-terminus, the 494-residue chain is Glutamate--tRNA ligase (494 aa).

A 'HIGH' region motif is present at residues 10-20 (PSPTGDPHVGT). The Zn(2+) site is built by cysteine 107, cysteine 109, cysteine 134, and histidine 136. A 'KMSKS' region motif is present at residues 251–255 (KLSKR). Position 254 (lysine 254) interacts with ATP.

This sequence belongs to the class-I aminoacyl-tRNA synthetase family. Glutamate--tRNA ligase type 1 subfamily. Monomer. The cofactor is Zn(2+).

The protein resides in the cytoplasm. It catalyses the reaction tRNA(Glu) + L-glutamate + ATP = L-glutamyl-tRNA(Glu) + AMP + diphosphate. Functionally, catalyzes the attachment of glutamate to tRNA(Glu) in a two-step reaction: glutamate is first activated by ATP to form Glu-AMP and then transferred to the acceptor end of tRNA(Glu). The polypeptide is Glutamate--tRNA ligase (Pseudomonas aeruginosa (strain ATCC 15692 / DSM 22644 / CIP 104116 / JCM 14847 / LMG 12228 / 1C / PRS 101 / PAO1)).